The chain runs to 101 residues: NAD(P)H-quinone oxidoreductase subunit 4L, chloroplastic (101 aa).

3 helical membrane passes run 2–22 (MLEH…YGLI), 32–52 (MCLE…SDLF), and 61–81 (IFSI…LAII).

This sequence belongs to the complex I subunit 4L family. NDH is composed of at least 16 different subunits, 5 of which are encoded in the nucleus.

Its subcellular location is the plastid. It localises to the chloroplast thylakoid membrane. It carries out the reaction a plastoquinone + NADH + (n+1) H(+)(in) = a plastoquinol + NAD(+) + n H(+)(out). The catalysed reaction is a plastoquinone + NADPH + (n+1) H(+)(in) = a plastoquinol + NADP(+) + n H(+)(out). Functionally, NDH shuttles electrons from NAD(P)H:plastoquinone, via FMN and iron-sulfur (Fe-S) centers, to quinones in the photosynthetic chain and possibly in a chloroplast respiratory chain. The immediate electron acceptor for the enzyme in this species is believed to be plastoquinone. Couples the redox reaction to proton translocation, and thus conserves the redox energy in a proton gradient. The chain is NAD(P)H-quinone oxidoreductase subunit 4L, chloroplastic from Ranunculus macranthus (Large buttercup).